The sequence spans 394 residues: Elongation factor Tu (394 aa).

In terms of domain architecture, tr-type G spans 10 to 204 (KPHVNIGTIG…AVDSYIPQPV (195 aa)). The G1 stretch occupies residues 19 to 26 (GHVDHGKT). A GTP-binding site is contributed by 19–26 (GHVDHGKT). Thr26 serves as a coordination point for Mg(2+). The tract at residues 60-64 (GITIS) is G2. Residues 81–84 (DCPG) form a G3 region. GTP is bound by residues 81–85 (DCPGH) and 136–139 (NKID). The interval 136-139 (NKID) is G4. Residues 174 to 176 (SAL) are G5.

The protein belongs to the TRAFAC class translation factor GTPase superfamily. Classic translation factor GTPase family. EF-Tu/EF-1A subfamily. As to quaternary structure, monomer.

Its subcellular location is the cytoplasm. It carries out the reaction GTP + H2O = GDP + phosphate + H(+). Its function is as follows. GTP hydrolase that promotes the GTP-dependent binding of aminoacyl-tRNA to the A-site of ribosomes during protein biosynthesis. This is Elongation factor Tu from Rickettsia peacockii (strain Rustic).